A 1276-amino-acid polypeptide reads, in one-letter code: MHELGTRQRPLSSSSSSSSSSNMTDVSAAAGGATAPAETAATSSSASKPLTNGANKTSTAMAAPTTTPTTAATAAGAAEAGAIASVAGISNQVKLEHHHRQSNNNRPVAPYPPVPAAKPKPTPTPTAESKFKSTSREVDVALRPTPARSSTISPGVSIHTQTIQQESSSAKPGMSSSSSSAQQDVDEVARLFEEKPEAFEKWLTERAPPEALSRLQEFIESRKPLKRPSVTSDLFQQWMSASPTVQQKSPRSLSNSSASSTLPECRRHLMDLDEGELFMELIRDVANELDIDVLCHKILVNVGLLTHADRGSLFLAKGTPHNKYLVAKLFDVTQKTALKDAVTRASAEEIIIPFGIGIAGMVAQTKQMINIKEAYKDARFNCEIDLKTGYKTNAILCMPICNYEGDIIGVAQIINKTNGCMEFDEHDVEIFRRYLTFCGIGIQNAQLFEMSVQEYRRNQILLNLARSIFEEQNNLECLVTKIMTEARELLNCERCSVFLVDLDCCEASHLEKIIEKPNQPEQRPTRAIMPGDSFDEKKMRNRFTVLFELGGEYQAASVSRPSKTELSTSTLAQIAQFVATTGQTVNICDVHEWVRDHNQIRAESEIDSTQAILCMPIVNAQKIVIGVAQLINKANGVPFTESDASIFEAFAIFCGLGIHNTQMYENACKLMAKQKVALECLSYHATASQDQTEKLTQDAIAEAESYNLYSFTFTDFELVDDDTCRAVLRMFLQCNLVSQFQIPYDVLCRWVLSVRKNYRPVKYHNWRHALNVAQTMFAMLKTGKMERFMTDLEILGLLVACLCHDLDHRGTNNAFQTKTESPLAILYTTSTMEHHHFDQCVMILNSEGNNIFQPRTTRTFLLLARRFLRFDLLPFRAFTRALRPLVRPLLELDVLELPDPSRIFLLTVYLRLVTRTIFLPPPEDEEEEDEVEDSVVLVVASVVVVVAVAASVVLKAELDVEALSPEDYRSVMKTVESAILSTDLAMYFKKRNAFLELVENGEFDWQGEEKKDLLCGMMMTACDVSAIAKPWEVQHKVAKLVADEFFDQGDLEKLQLNTQPVAMMDRERKDELPKMQVGFIDVICLPLYRVLCDTFPWITPLYEGTLENRRNWQDLAEKVEMGLTWIDHDTIDKPVEEFAGCADEEIKDIEFTVTTLNCNQQAQHGAGAGGDDSHTPEHQRSGSRLSMKKTGALGKAVRSKLSKTLYNSMDGSKPKTSLKLLESHVSEDMDDKSPTSPSQPPHAGGSVGRMSASSSTSSAGTVVDKSKKRSKLCSLL.

3 disordered regions span residues methionine 1–glycine 76, asparagine 91–valine 185, and alanine 241–serine 260. 2 stretches are compositionally biased toward low complexity: residues serine 12 to serine 47 and threonine 57 to glycine 76. Residues alanine 109 to threonine 124 show a composition bias toward pro residues. Residues serine 129–valine 140 are compositionally biased toward basic and acidic residues. A compositionally biased stretch (polar residues) spans alanine 147–glutamate 166. 2 stretches are compositionally biased toward low complexity: residues serine 167 to serine 180 and serine 249 to serine 260. 2 consecutive GAF domains span residues aspartate 290 to isoleucine 442 and asparagine 474 to isoleucine 658. The 432-residue stretch at serine 688–valine 1119 folds into the PDEase domain. Residue histidine 764 is the Proton donor of the active site. Residues histidine 768, histidine 804, aspartate 805, and aspartate 1023 each contribute to the a divalent metal cation site. 2 disordered regions span residues alanine 1162 to leucine 1193 and leucine 1205 to leucine 1276. Composition is skewed to basic and acidic residues over residues aspartate 1171 to arginine 1180 and leucine 1221 to serine 1233. The segment covering glycine 1248–valine 1263 has biased composition (low complexity). A compositionally biased stretch (basic residues) spans serine 1266–leucine 1276. Residue cysteine 1273 is modified to Cysteine methyl ester. The S-farnesyl cysteine moiety is linked to residue cysteine 1273. A propeptide spans serine 1274–leucine 1276 (removed in mature form).

Belongs to the cyclic nucleotide phosphodiesterase family. Interacts with PrBP. It depends on a divalent metal cation as a cofactor.

The protein resides in the cell membrane. It catalyses the reaction 3',5'-cyclic GMP + H2O = GMP + H(+). In terms of biological role, has a role regulating cGMP transport in Malpighian tubule principal cells. This chain is cGMP-specific 3',5'-cyclic phosphodiesterase, found in Drosophila persimilis (Fruit fly).